Here is an 849-residue protein sequence, read N- to C-terminus: MSIARLVYSLFRRVRSVLLLFITISLLFYYTFQNEIDILNSYALNDSLPSINNYEHNTEGSSKLDPPDLSSTGSDRIATDKENGNVAVDLSDPATLREKNKYFPLLLKGSSHQIGSNLPISSLLTYKEKYPVLFEYSSPSLTSISQNDVHKIQPAMQLPPDVDMIKQIKDIFMKSWNQEQLLLKSNLRRESTWPIDLIDSLDTLYLCGETKLFQDSVNIIEDFDFRVPPLAMEVIDIPDITTRVLEGLLSAYELSMDKRLLNKAKHVADFILRSFDTPNRIPILKYFWKSDLRNRFPDRTVPSGQLTTMALAFIRLSQLTRLNKYFDAVERVFTTIRQSYNEFDMEFMLPDVVDASGCQLLTQEEIENGAHLKGSSIMKSINENFKFVHCQQLGKFLNPPIDDNSLQEQSQYQAYRINEKTVPILENLFKINDLFQSSYDILDGSSKNANAATMDPSIGSEVEAVDEIIEKRNFKDGTKKDSTKNTVGDKSLIDSQTFLTNSISNIFKFMTFRPMLPKQTENKKFNFLNSILTKSQFMPTTNELDVTIRKSYDVSLYSCRLGGILGLSSRVPHRGGVNTKYILPSSLLEMSEIITESCFMLMEEFDGLLPQKFELDPCTDETNGNCEFNGETKSRMIANGEYETFENDLDVGIKVSNYGKGGNDQKAKRNVLSKDGITETQNIKGDTVGSSKSIAEIDGDEVTQIRRVFTLGKDIKPHITTDDTMGSQWKNHPDWPFWVNKVESRRLLDSNIIESIFYMYRISGEQKWRSMGKQSFGILMQELMELNSGAKGLWQIKEFYENGEKVNNDLPSYWFSRTLKYYLLLFSDGDKVSLDKHILTQGGHIIKKK.

Residues 1 to 12 are Cytoplasmic-facing; the sequence is MSIARLVYSLFR. The chain crosses the membrane as a helical; Signal-anchor for type II membrane protein span at residues 13–32; the sequence is RVRSVLLLFITISLLFYYTF. Topologically, residues 33–849 are lumenal; the sequence is QNEIDILNSY…TQGGHIIKKK (817 aa). Residue N45 is glycosylated (N-linked (GlcNAc...) asparagine). Residues 56 to 79 are disordered; the sequence is HNTEGSSKLDPPDLSSTGSDRIAT. Residues C559 and C598 are joined by a disulfide bond.

Belongs to the glycosyl hydrolase 47 family. The cofactor is Ca(2+).

It is found in the endoplasmic reticulum membrane. It participates in protein modification; protein glycosylation. Putative mannosidase involved in glycoprotein quality control since it is involved in the targeting of misfolded glycoproteins for ER-associated protein degradation (ERAD). The sequence is that of Putative endoplasmic reticulum mannosidase MNL2 (MNL2) from Saccharomyces cerevisiae (strain ATCC 204508 / S288c) (Baker's yeast).